The chain runs to 313 residues: Ribosomal RNA small subunit methyltransferase H (313 aa).

S-adenosyl-L-methionine contacts are provided by residues 35 to 37 (GGH), Asp55, Phe79, Asp100, and Gln107.

It belongs to the methyltransferase superfamily. RsmH family.

The protein localises to the cytoplasm. It catalyses the reaction cytidine(1402) in 16S rRNA + S-adenosyl-L-methionine = N(4)-methylcytidine(1402) in 16S rRNA + S-adenosyl-L-homocysteine + H(+). Functionally, specifically methylates the N4 position of cytidine in position 1402 (C1402) of 16S rRNA. This Burkholderia mallei (strain NCTC 10247) protein is Ribosomal RNA small subunit methyltransferase H.